A 94-amino-acid chain; its full sequence is DNA-directed RNA polymerase subunit omega (94 aa).

The protein belongs to the RNA polymerase subunit omega family. In terms of assembly, the RNAP catalytic core consists of 2 alpha, 1 beta, 1 beta' and 1 omega subunit. When a sigma factor is associated with the core the holoenzyme is formed, which can initiate transcription.

The catalysed reaction is RNA(n) + a ribonucleoside 5'-triphosphate = RNA(n+1) + diphosphate. In terms of biological role, promotes RNA polymerase assembly. Latches the N- and C-terminal regions of the beta' subunit thereby facilitating its interaction with the beta and alpha subunits. The protein is DNA-directed RNA polymerase subunit omega of Parafrankia sp. (strain EAN1pec).